Consider the following 249-residue polypeptide: Tryptophan synthase alpha chain (249 aa).

Residues Glu43 and Asp54 each act as proton acceptor in the active site.

The protein belongs to the TrpA family. In terms of assembly, tetramer of two alpha and two beta chains.

It carries out the reaction (1S,2R)-1-C-(indol-3-yl)glycerol 3-phosphate + L-serine = D-glyceraldehyde 3-phosphate + L-tryptophan + H2O. The protein operates within amino-acid biosynthesis; L-tryptophan biosynthesis; L-tryptophan from chorismate: step 5/5. The alpha subunit is responsible for the aldol cleavage of indoleglycerol phosphate to indole and glyceraldehyde 3-phosphate. In Campylobacter jejuni subsp. jejuni serotype O:6 (strain 81116 / NCTC 11828), this protein is Tryptophan synthase alpha chain.